We begin with the raw amino-acid sequence, 391 residues long: S-adenosylmethionine synthase 1 (391 aa).

Glu9 lines the Mg(2+) pocket. His15 serves as a coordination point for ATP. Glu43 serves as a coordination point for K(+). Residues Glu56 and Gln99 each contribute to the L-methionine site. Residues 167-169, 235-238, Asp246, 252-253, Ala269, Lys273, and Lys277 contribute to the ATP site; these read DGK, SGRF, and RK. Residue Asp246 participates in L-methionine binding. L-methionine is bound at residue Lys277.

Belongs to the AdoMet synthase family. As to quaternary structure, homotetramer. The cofactor is Mn(2+). It depends on Mg(2+) as a cofactor. Requires Co(2+) as cofactor. K(+) is required as a cofactor.

The protein resides in the cytoplasm. The catalysed reaction is L-methionine + ATP + H2O = S-adenosyl-L-methionine + phosphate + diphosphate. It participates in amino-acid biosynthesis; S-adenosyl-L-methionine biosynthesis; S-adenosyl-L-methionine from L-methionine: step 1/1. Functionally, catalyzes the formation of S-adenosylmethionine from methionine and ATP. The reaction comprises two steps that are both catalyzed by the same enzyme: formation of S-adenosylmethionine (AdoMet) and triphosphate, and subsequent hydrolysis of the triphosphate. The chain is S-adenosylmethionine synthase 1 (METK1) from Vitis vinifera (Grape).